A 266-amino-acid polypeptide reads, in one-letter code: Mediator of RNA polymerase II transcription subunit 18 (266 aa).

Belongs to the Mediator complex subunit 18 family. Component of the Mediator complex.

The protein resides in the nucleus. Component of the Mediator complex, a coactivator involved in the regulated transcription of nearly all RNA polymerase II-dependent genes. Mediator functions as a bridge to convey information from gene-specific regulatory proteins to the basal RNA polymerase II transcription machinery. Mediator is recruited to promoters by direct interactions with regulatory proteins and serves as a scaffold for the assembly of a functional preinitiation complex with RNA polymerase II and the general transcription factors. The sequence is that of Mediator of RNA polymerase II transcription subunit 18 (SRB5) from Candida glabrata (strain ATCC 2001 / BCRC 20586 / JCM 3761 / NBRC 0622 / NRRL Y-65 / CBS 138) (Yeast).